A 50-amino-acid chain; its full sequence is Large ribosomal subunit protein bL33A (50 aa).

The protein belongs to the bacterial ribosomal protein bL33 family.

This is Large ribosomal subunit protein bL33A (rpmG1) from Mycoplasmopsis pulmonis (strain UAB CTIP) (Mycoplasma pulmonis).